A 1251-amino-acid chain; its full sequence is MSSEEFKGLPIKRDISSTIYADRPPALSAPPCVGATGNDKIQVLPIPKKSRTIKTDKPRPFLCHICTRGFVRQEHLKRHQRAHTNEKPFLCVFCGRCFARRDLVLRHQHKLHSALVSKESINSKDKTEIDAINDKNIIQIQGNKQTILPTPSNPLAKTAVQLKKAAKEKKNGKQGKLDLSPSYGANNHSTDVSPSVGNSSTPAVIEETDSSSHFPLPDTNIPTKSKRHASFSASSAFTYSSDNFQKLHQQAKSDFDELQESIPHQVGFSTPQLTAQQLIENAIESGVVDLETLDLPPFLSLDGLPPASSSAAVAASEQIDICPSSATDTISGANSTPNQAATAPPFQLPIARESSSLFLANTPYLSDFLTMGSSYGGSGGFAKSITADPSLDYFNYKNHSHPDSRHNNSSSGINYSNNKNNNESIEKSQNNSNVINETIDHTDIHAHHADAHDDSFIESEEWLSKFIMDSQIDNDLKLNINHFNDIGFNNLHPQNPTTHSEPRNMHNENRDMHRSASKFQSVSENISPREQMSLFKTKQNKAISKFLSDEKIPSTASPSSSASPVQFDKKNVDINEFLLDESVSNLFTTRQIDLFKKNVNLYSPLFQNQKDAVSSTSLTPSLTTQTATTQSGPGWTDSSQKLTFFTEQLRNLIIKENNLKSNLFPTVDELNHYVDLYQVEFHKYFPFIHLYSIIPSSENYPLVISISMIGALYGFHSTHALLLSKIARTRVRMFLENTRSNHDKTPIWLMQSLVLLTFTSIFSNDMNAFRTVNTQIMILVQLIKISKLNYPLENFIKPPIESDHVLEYQDNPAVLNQFKAQYNTREQINRNFKYFILAQSRIRICHIVLLISNLFKSLVDFDCCFHSIDLKCGVPCYNEVLFFCENSRTWNENLTRFNIVLDSKFSLIEVSNGESNYEKCLMYLSNGNPYLYKNAKISFKTLLSLLISIHEKINIERDALKDSYESDFHAKNVQWRMHSRPLVATMLKHWELLYIKNGGILALSDENLPIINTNPSFRLIIPLYFFAKLRKCLDIAPTLRCIWNQDWNSMNSSLEKVCYERESLREATEYAVSVITFWIDTVSVMKGKSTQTPIFTITCIFVSILVIAGYMRRLEDFAQNKNSDCMIGSLKSTDRILWLKAFKTLKRIESHLSEREYKLQTFAEFLRVPDNGSLDIESLDSSLIENTLNSHDVTNQALDIITRTRLSSRTLYCGARILGDTPVWPVSLLFAHALQSRAIYNINHRKSVNSV.

2 consecutive C2H2-type zinc fingers follow at residues 61–83 and 89–112; these read FLCH…QRAH and FLCV…HKLH. 2 disordered regions span residues 160 to 227 and 398 to 428; these read VQLK…KSKR and NHSH…IEKS. A compositionally biased stretch (basic residues) spans 164-173; it reads KAAKEKKNGK. The span at 183–202 shows a compositional bias: polar residues; that stretch reads YGANNHSTDVSPSVGNSSTP. The segment covering 407 to 428 has biased composition (low complexity); it reads NNSSSGINYSNNKNNNESIEKS. Residues S527 and S603 each carry the phosphoserine modification. The span at 617-634 shows a compositional bias: low complexity; that stretch reads SLTPSLTTQTATTQSGPG. Positions 617–636 are disordered; the sequence is SLTPSLTTQTATTQSGPGWT.

Belongs to the RSF2/TDA9 family.

The protein resides in the nucleus. DNA-binding protein that acts probably as a transcription factor. This is Probable transcription factor TDA9 (TDA9) from Saccharomyces cerevisiae (strain ATCC 204508 / S288c) (Baker's yeast).